We begin with the raw amino-acid sequence, 501 residues long: Probable cytosol aminopeptidase (501 aa).

Mn(2+) contacts are provided by lysine 268 and aspartate 273. Lysine 280 is an active-site residue. Residues aspartate 291, aspartate 350, and glutamate 352 each contribute to the Mn(2+) site. Arginine 354 is an active-site residue.

This sequence belongs to the peptidase M17 family. Mn(2+) serves as cofactor.

The protein resides in the cytoplasm. The enzyme catalyses Release of an N-terminal amino acid, Xaa-|-Yaa-, in which Xaa is preferably Leu, but may be other amino acids including Pro although not Arg or Lys, and Yaa may be Pro. Amino acid amides and methyl esters are also readily hydrolyzed, but rates on arylamides are exceedingly low.. It carries out the reaction Release of an N-terminal amino acid, preferentially leucine, but not glutamic or aspartic acids.. In terms of biological role, presumably involved in the processing and regular turnover of intracellular proteins. Catalyzes the removal of unsubstituted N-terminal amino acids from various peptides. In Nitrosococcus oceani (strain ATCC 19707 / BCRC 17464 / JCM 30415 / NCIMB 11848 / C-107), this protein is Probable cytosol aminopeptidase.